The following is a 402-amino-acid chain: Elongation factor Tu (402 aa).

A tr-type G domain is found at 16–211 (KEHINIGTIG…AVDSYIDSPV (196 aa)). A G1 region spans residues 25–32 (GHVDHGKT). 25 to 32 (GHVDHGKT) provides a ligand contact to GTP. Threonine 32 contributes to the Mg(2+) binding site. The G2 stretch occupies residues 66–70 (GITIN). Positions 87–90 (DCPG) are G3. GTP-binding positions include 87-91 (DCPGH) and 142-145 (NKID). The G4 stretch occupies residues 142–145 (NKID). Residues 181 to 183 (SAR) form a G5 region.

The protein belongs to the TRAFAC class translation factor GTPase superfamily. Classic translation factor GTPase family. EF-Tu/EF-1A subfamily. Monomer.

The protein localises to the cytoplasm. The catalysed reaction is GTP + H2O = GDP + phosphate + H(+). In terms of biological role, GTP hydrolase that promotes the GTP-dependent binding of aminoacyl-tRNA to the A-site of ribosomes during protein biosynthesis. The polypeptide is Elongation factor Tu (Mesomycoplasma hyopneumoniae (strain 232) (Mycoplasma hyopneumoniae)).